Reading from the N-terminus, the 416-residue chain is Adenylosuccinate synthetase (416 aa).

GTP is bound by residues 13–19 (GDEGKGK) and 41–43 (GHT). Aspartate 14 serves as the catalytic Proton acceptor. Aspartate 14 and glycine 41 together coordinate Mg(2+). Residues 14-17 (DEGK), 39-42 (NAGH), threonine 126, arginine 140, glutamine 220, threonine 235, and arginine 299 contribute to the IMP site. Residue histidine 42 is the Proton donor of the active site. Substrate is bound at residue 295–301 (VSTGRKR). GTP-binding positions include arginine 301, 327–329 (KLD), and 405–407 (STS).

Belongs to the adenylosuccinate synthetase family. As to quaternary structure, homodimer. The cofactor is Mg(2+).

The protein resides in the cytoplasm. It carries out the reaction IMP + L-aspartate + GTP = N(6)-(1,2-dicarboxyethyl)-AMP + GDP + phosphate + 2 H(+). Its pathway is purine metabolism; AMP biosynthesis via de novo pathway; AMP from IMP: step 1/2. Functionally, plays an important role in the de novo pathway of purine nucleotide biosynthesis. Catalyzes the first committed step in the biosynthesis of AMP from IMP. This is Adenylosuccinate synthetase from Campylobacter jejuni subsp. jejuni serotype O:23/36 (strain 81-176).